The following is a 227-amino-acid chain: Isopentenyl-diphosphate Delta-isomerase 1 (227 aa).

Lys36 lines the substrate pocket. The Mg(2+) site is built by His40 and His51. The region spanning 49–199 (LLHRAFSVFL…EIKLTPWFKI (151 aa)) is the Nudix hydrolase domain. Substrate contacts are provided by Arg70 and Lys74. Cys86 is an active-site residue. Substrate is bound at residue Ser87. 2 residues coordinate Mg(2+): Glu146 and Glu148. Glu148 is an active-site residue. An N6-acetyllysine modification is found at Lys176. A Microbody targeting signal motif is present at residues 225-227 (HRL).

It belongs to the IPP isomerase type 1 family. As to quaternary structure, monomer. It depends on Mg(2+) as a cofactor.

It localises to the peroxisome. It catalyses the reaction isopentenyl diphosphate = dimethylallyl diphosphate. It participates in isoprenoid biosynthesis; dimethylallyl diphosphate biosynthesis; dimethylallyl diphosphate from isopentenyl diphosphate: step 1/1. Its function is as follows. Catalyzes the 1,3-allylic rearrangement of the homoallylic substrate isopentenyl (IPP) to its highly electrophilic allylic isomer, dimethylallyl diphosphate (DMAPP). This chain is Isopentenyl-diphosphate Delta-isomerase 1 (Idi1), found in Mus musculus (Mouse).